The primary structure comprises 176 residues: Ribosome rescue factor SmrB (176 aa).

Residues 93–168 (LDLHGYRQSE…GDAALLVLID (76 aa)) form the Smr domain.

Belongs to the SmrB family. In terms of assembly, associates with collided ribosomes, but not with correctly translating polysomes.

Its function is as follows. Acts as a ribosome collision sensor. Detects stalled/collided disomes (pairs of ribosomes where the leading ribosome is stalled and a second ribosome has collided with it) and endonucleolytically cleaves mRNA at the 5' boundary of the stalled ribosome. Stalled/collided disomes form a new interface (primarily via the 30S subunits) that binds SmrB. Cleaved mRNA becomes available for tmRNA ligation, leading to ribosomal subunit dissociation and rescue of stalled ribosomes. This chain is Ribosome rescue factor SmrB, found in Shewanella baltica (strain OS195).